The chain runs to 275 residues: Formamidopyrimidine-DNA glycosylase (275 aa).

Pro-2 serves as the catalytic Schiff-base intermediate with DNA. Glu-3 (proton donor) is an active-site residue. Lys-58 functions as the Proton donor; for beta-elimination activity in the catalytic mechanism. DNA is bound by residues His-92, Arg-111, and Arg-154. The segment at 239 to 273 (HVYHRQGLPCQRCGTPIERIKVAQRGTHFCPHCQV) adopts an FPG-type zinc-finger fold. Arg-263 (proton donor; for delta-elimination activity) is an active-site residue.

This sequence belongs to the FPG family. Monomer. The cofactor is Zn(2+).

It carries out the reaction Hydrolysis of DNA containing ring-opened 7-methylguanine residues, releasing 2,6-diamino-4-hydroxy-5-(N-methyl)formamidopyrimidine.. It catalyses the reaction 2'-deoxyribonucleotide-(2'-deoxyribose 5'-phosphate)-2'-deoxyribonucleotide-DNA = a 3'-end 2'-deoxyribonucleotide-(2,3-dehydro-2,3-deoxyribose 5'-phosphate)-DNA + a 5'-end 5'-phospho-2'-deoxyribonucleoside-DNA + H(+). Functionally, involved in base excision repair of DNA damaged by oxidation or by mutagenic agents. Acts as a DNA glycosylase that recognizes and removes damaged bases. Has a preference for oxidized purines, such as 7,8-dihydro-8-oxoguanine (8-oxoG). Has AP (apurinic/apyrimidinic) lyase activity and introduces nicks in the DNA strand. Cleaves the DNA backbone by beta-delta elimination to generate a single-strand break at the site of the removed base with both 3'- and 5'-phosphates. This is Formamidopyrimidine-DNA glycosylase from Pediococcus pentosaceus (strain ATCC 25745 / CCUG 21536 / LMG 10740 / 183-1w).